Reading from the N-terminus, the 149-residue chain is MAADGLSSKALKVKRELGENTPLLSDEELMGLSVRELNHHLRGLSKEEVARLKQRRRTLKNRGYAASCRVKRVCQKEELQKQKMELEWEVDKLARENAAMRLELDTLRGKYEALQGFARTVAAHGPPAKVATASVITIVKSGANQAAYS.

Residues 51-76 (RLKQRRRTLKNRGYAASCRVKRVCQK) are basic motif. Residues 51–114 (RLKQRRRTLK…DTLRGKYEAL (64 aa)) enclose the bZIP domain. Residues 79–93 (LQKQKMELEWEVDKL) form a leucine-zipper region.

This sequence belongs to the bZIP family. Maf subfamily. In terms of assembly, monomer and homo- or heterodimer. As to expression, highly expressed in the ovary, lower expression in the brain, heart and mesenterium.

It localises to the nucleus. In terms of biological role, since it lacks a putative transactivation domain, it may behave as a transcriptional repressor when it dimerizes among itself. May also serve as a transcriptional activator by dimerizing with other (usually larger) basic-zipper proteins and recruiting them to specific DNA-binding sites. May be involved in the cellular stress response. This is Transcription factor MafF (MAFF) from Gallus gallus (Chicken).